The following is a 247-amino-acid chain: Probable transcriptional regulatory protein GAU_0635 (247 aa).

It belongs to the TACO1 family.

It is found in the cytoplasm. This is Probable transcriptional regulatory protein GAU_0635 from Gemmatimonas aurantiaca (strain DSM 14586 / JCM 11422 / NBRC 100505 / T-27).